The following is a 202-amino-acid chain: Large ribosomal subunit protein uL13 (202 aa).

This sequence belongs to the universal ribosomal protein uL13 family. As to quaternary structure, component of the large ribosomal subunit (LSU). Mature N.crassa ribosomes consist of a small (40S) and a large (60S) subunit. The 40S small subunit contains 1 molecule of ribosomal RNA (18S rRNA) and at least 32 different proteins. The large 60S subunit contains 3 rRNA molecules (26S, 5.8S and 5S rRNA) and at least 42 different proteins.

The protein resides in the cytoplasm. Component of the ribosome, a large ribonucleoprotein complex responsible for the synthesis of proteins in the cell. The small ribosomal subunit (SSU) binds messenger RNAs (mRNAs) and translates the encoded message by selecting cognate aminoacyl-transfer RNA (tRNA) molecules. The large subunit (LSU) contains the ribosomal catalytic site termed the peptidyl transferase center (PTC), which catalyzes the formation of peptide bonds, thereby polymerizing the amino acids delivered by tRNAs into a polypeptide chain. The nascent polypeptides leave the ribosome through a tunnel in the LSU and interact with protein factors that function in enzymatic processing, targeting, and the membrane insertion of nascent chains at the exit of the ribosomal tunnel. This chain is Large ribosomal subunit protein uL13 (crp-46), found in Neurospora crassa (strain ATCC 24698 / 74-OR23-1A / CBS 708.71 / DSM 1257 / FGSC 987).